The following is a 496-amino-acid chain: Alanine aminotransferase 1 (496 aa).

Residue A2 is modified to N-acetylalanine. Phosphothreonine is present on T22. K314 carries the N6-(pyridoxal phosphate)lysine modification.

Belongs to the class-I pyridoxal-phosphate-dependent aminotransferase family. Alanine aminotransferase subfamily. As to quaternary structure, homodimer. Requires pyridoxal 5'-phosphate as cofactor. Liver, kidney, heart, and skeletal muscles. Expressed at moderate levels in the adipose tissue.

The protein localises to the cytoplasm. The enzyme catalyses L-alanine + 2-oxoglutarate = pyruvate + L-glutamate. Its pathway is amino-acid degradation; L-alanine degradation via transaminase pathway; pyruvate from L-alanine: step 1/1. Functionally, catalyzes the reversible transamination between alanine and 2-oxoglutarate to form pyruvate and glutamate. Participates in cellular nitrogen metabolism and also in liver gluconeogenesis starting with precursors transported from skeletal muscles. This Homo sapiens (Human) protein is Alanine aminotransferase 1 (GPT).